Consider the following 148-residue polypeptide: UPF0178 protein LPC_0108 (148 aa).

The protein belongs to the UPF0178 family.

This Legionella pneumophila (strain Corby) protein is UPF0178 protein LPC_0108.